Here is a 117-residue protein sequence, read N- to C-terminus: Large ribosomal subunit protein bL20c (117 aa).

The protein belongs to the bacterial ribosomal protein bL20 family.

It localises to the plastid. The protein resides in the chloroplast. Its function is as follows. Binds directly to 23S ribosomal RNA and is necessary for the in vitro assembly process of the 50S ribosomal subunit. It is not involved in the protein synthesizing functions of that subunit. In Eucalyptus globulus subsp. globulus (Tasmanian blue gum), this protein is Large ribosomal subunit protein bL20c.